Reading from the N-terminus, the 913-residue chain is Protein ECT2 (913 aa).

Ala2 is modified (N-acetylalanine). BRCT domains are found at residues 176–260 (MLNL…AAVD) and 266–354 (FKVP…MYLY). Position 359 is a phosphothreonine; by PKC/PRKCI (Thr359). Phosphoserine is present on residues Ser367 and Ser370. The residue at position 373 (Thr373) is a Phosphothreonine. A Phosphoserine modification is found at Ser376. 2 consecutive short sequence motifs (nuclear localization signal) follow at residues 378-382 (RKRRR) and 401-405 (PRKRP). Disordered regions lie at residues 389 to 415 (QLSRETDLSPFPPRKRPSAEHSLSIGS) and 427 to 450 (IHYGETPKSCAKSSRSSTPVPPKQ). Thr444 is subject to Phosphothreonine; by CDK1. The DH domain maps to 452-641 (ARWQVAKELY…KEVMTHINED (190 aa)). Lys611 participates in a covalent cross-link: Glycyl lysine isopeptide (Lys-Gly) (interchain with G-Cter in SUMO2). Positions 675–794 (RVETVSLGEH…KMLCRHVANT (120 aa)) constitute a PH domain. Phosphoserine is present on residues Ser716 and Ser842. Phosphothreonine; by CDK1 is present on Thr846. A disordered region spans residues 853 to 874 (MALSSSHSSEGRSPPSSGKLAV). A compositionally biased stretch (low complexity) spans 856 to 870 (SSSHSSEGRSPPSSG). Ser861 and Ser865 each carry phosphoserine.

Homodimer. Homooligomer. Found in the centralspindlin complex. Interacts with NR1I3. Interacts (Thr-359 phosphorylated form) with PARD6A; the interaction is observed in cancer cells. Interacts (Thr-359 phosphorylated form) with PRKCI; the interaction is observed in cancer cells. Interacts with PKP4; the interaction is observed at the midbody. Interacts with RACGAP1; the interaction is direct, occurs in a microtubule-dependent manner, occurs at anaphase and during cytokinesis, is inhibited in metaphase by phosphorylation of ECT2 on Thr-373 and is stimulated in early anaphase by dephosphorylation of ECT2 probably on Thr-373 through CDK1 activity. Interacts with PLK1; the interaction is stimulated upon its phosphorylation on Thr-444. Interacts with RHOA; the interaction results in allosteric activation of ECT2. Interacts with KIF23, PARD3, PARD6B and PRKCQ. Interacts with NEDD9/HEF1. Phosphorylated by PLK1 in vitro. Hyperphosphorylated during the G2 phase of the cell cycle. Phosphorylation at Thr-373 occurs during the G2/M phase, relieves its auto-inhibition status and stimulates its GEF activity. Phosphorylation at Thr-444 in G2/M phase is required for subsequent binding with PLK1 and Rho exchange activation. Dephosphorylated at the time of cytokinesis. Phosphorylation at Thr-359 is required for its transformation activity in cancer cells. As to expression, highest expression in testis. Also detectable in brain, kidney, liver and spleen.

The protein resides in the nucleus. It is found in the cytoplasm. The protein localises to the cytoskeleton. It localises to the spindle. Its subcellular location is the cleavage furrow. The protein resides in the midbody. It is found in the cell junction. The protein localises to the tight junction. Autoinhibited by the C-terminal PH domain which folds back and binds to the surface of the DH domain, blocking binding of RHOA to the catalytic center of the DH domain. The 2nd BRCT domain is also involved in inhibition, probably by helping to impede RHOA binding. Allosterically activated by binding of activated GTP-bound RHOA to the PH domain which stimulates the release of PH inhibition and promotes the binding of substrate RHOA to the catalytic center. Binding of phosphorylated RACGAP1 to the N-terminal BRCT domain-containing region also releases autoinhibition. Its function is as follows. Guanine nucleotide exchange factor (GEF) that catalyzes the exchange of GDP for GTP. Promotes guanine nucleotide exchange on the Rho family members of small GTPases, like RHOA, RHOC, RAC1 and CDC42. Required for signal transduction pathways involved in the regulation of cytokinesis. Component of the centralspindlin complex that serves as a microtubule-dependent and Rho-mediated signaling required for the myosin contractile ring formation during the cell cycle cytokinesis. Regulates the translocation of RHOA from the central spindle to the equatorial region. Plays a role in the control of mitotic spindle assembly; regulates the activation of CDC42 in metaphase for the process of spindle fibers attachment to kinetochores before chromosome congression. Involved in the regulation of epithelial cell polarity; participates in the formation of epithelial tight junctions in a polarity complex PARD3-PARD6-protein kinase PRKCQ-dependent manner. Plays a role in the regulation of neurite outgrowth. Inhibits phenobarbital (PB)-induced NR1I3 nuclear translocation. Stimulates the activity of RAC1 through its association with the oncogenic PARD6A-PRKCI complex in cancer cells, thereby acting to coordinately drive tumor cell proliferation and invasion. Also stimulates genotoxic stress-induced RHOB activity in breast cancer cells leading to their cell death. This Mus musculus (Mouse) protein is Protein ECT2 (Ect2).